The chain runs to 482 residues: MVTTAEKTNIGYITQIIGPVVDVKFPNGKLPQIYNALTIKGTNEAGQQLNLTVEVQQLLGDNQIRAVAMSSTDGLVRGLEVVDTGAPISVPVGKATLGRIFNVLGEPVDNRGPVNNQETLPIHRPAPKLTELETKPSVFETGIKVVDLLTPYRRGGKIGLFGGAGVGKTVIMMELINNIATQHGGVSVFAGVGERTREGNDLYNEMIESGVINNENLNESKIALVYGQMNEPPGARMRVGLSGLTMAEYFRDVNKQDVLLFIDNIFRFVQAGSEVSALLGRMPSAVGYQPTLGTDVGQLQERITSTTEGSITSIQAVYVPADDLTDPAPATTFAHLDGTTVLSRGLASKGIYPAVDPLGSTSTMLQPNIVGDEHYNTARAVQSTLQRYKELQDIIAILGLDELSEEDRLIVARARKVERFLSQPFFVAEVFTGSPGKYVKLEDTIKGFQKILSGELDDLPEQAFYLVGDINEAIAKAEKIKG.

Position 162–169 (162–169 (GGAGVGKT)) interacts with ATP.

The protein belongs to the ATPase alpha/beta chains family. As to quaternary structure, F-type ATPases have 2 components, CF(1) - the catalytic core - and CF(0) - the membrane proton channel. CF(1) has five subunits: alpha(3), beta(3), gamma(1), delta(1), epsilon(1). CF(0) has four main subunits: a(1), b(1), b'(1) and c(9-12).

Its subcellular location is the cellular thylakoid membrane. It carries out the reaction ATP + H2O + 4 H(+)(in) = ADP + phosphate + 5 H(+)(out). Produces ATP from ADP in the presence of a proton gradient across the membrane. The catalytic sites are hosted primarily by the beta subunits. The protein is ATP synthase subunit beta of Nostoc sp. (strain PCC 7120 / SAG 25.82 / UTEX 2576).